The sequence spans 471 residues: Glutamate--tRNA ligase (471 aa).

The short motif at 9–19 is the 'HIGH' region element; that stretch reads PSPTGYLHVGG. Zn(2+)-binding residues include Cys-98, Cys-100, Cys-125, and His-127. The short motif at 237–241 is the 'KMSKS' region element; it reads KLSKR. Lys-240 provides a ligand contact to ATP.

This sequence belongs to the class-I aminoacyl-tRNA synthetase family. Glutamate--tRNA ligase type 1 subfamily. As to quaternary structure, monomer. The cofactor is Zn(2+).

The protein localises to the cytoplasm. The catalysed reaction is tRNA(Glu) + L-glutamate + ATP = L-glutamyl-tRNA(Glu) + AMP + diphosphate. In terms of biological role, catalyzes the attachment of glutamate to tRNA(Glu) in a two-step reaction: glutamate is first activated by ATP to form Glu-AMP and then transferred to the acceptor end of tRNA(Glu). This Citrobacter koseri (strain ATCC BAA-895 / CDC 4225-83 / SGSC4696) protein is Glutamate--tRNA ligase.